Here is a 418-residue protein sequence, read N- to C-terminus: L-rhamnose isomerase (418 aa).

Residues H261, D293, and D295 each contribute to the Mn(2+) site.

Belongs to the rhamnose isomerase family. Mn(2+) serves as cofactor.

It is found in the cytoplasm. The enzyme catalyses L-rhamnopyranose = L-rhamnulose. It participates in carbohydrate degradation; L-rhamnose degradation; glycerone phosphate from L-rhamnose: step 1/3. Catalyzes the interconversion of L-rhamnose and L-rhamnulose. The sequence is that of L-rhamnose isomerase from Clostridium beijerinckii (strain ATCC 51743 / NCIMB 8052) (Clostridium acetobutylicum).